The following is a 252-amino-acid chain: MTILKQMMRKLKNEKIHMTLIDPAAKSPDESAKIAKEAEMAGTDFIMVGGSTDIDERLMDQTVSAIKENTNLKVILFPGSSNMISRHADAIFFMSLLNSSDREFIVGHQVKASKFLSLLGIEKIPMAYLVFSPGMTVGRVGKANLIDSFDRETALSYSLAAQYMGFKLIYFEAGSGAPRPVSEDTISYVKSKINIPLIVGGGIRDPETAMRIALAGADMIVTGSIAEKSNNVYSVLRNIIGKIKSIEIKNSV.

2 residues coordinate Mg(2+): Asp-22 and Ser-51. Sn-glycerol 1-phosphate-binding positions include 170-176 (YFEAGSG), 201-202 (GG), and 223-224 (GS).

Belongs to the GGGP/HepGP synthase family. Group II subfamily. Mg(2+) serves as cofactor.

The protein localises to the cytoplasm. The catalysed reaction is sn-glycerol 1-phosphate + (2E,6E,10E)-geranylgeranyl diphosphate = sn-3-O-(geranylgeranyl)glycerol 1-phosphate + diphosphate. The protein operates within membrane lipid metabolism; glycerophospholipid metabolism. Prenyltransferase that catalyzes the transfer of the geranylgeranyl moiety of geranylgeranyl diphosphate (GGPP) to the C3 hydroxyl of sn-glycerol-1-phosphate (G1P). This reaction is the first ether-bond-formation step in the biosynthesis of archaeal membrane lipids. The chain is Geranylgeranylglyceryl phosphate synthase from Thermoplasma volcanium (strain ATCC 51530 / DSM 4299 / JCM 9571 / NBRC 15438 / GSS1).